Reading from the N-terminus, the 113-residue chain is Cell division topological specificity factor (113 aa).

Belongs to the MinE family.

In terms of biological role, prevents the cell division inhibition by proteins MinC and MinD at internal division sites while permitting inhibition at polar sites. This ensures cell division at the proper site by restricting the formation of a division septum at the midpoint of the long axis of the cell. This chain is Cell division topological specificity factor, found in Methylobacterium radiotolerans (strain ATCC 27329 / DSM 1819 / JCM 2831 / NBRC 15690 / NCIMB 10815 / 0-1).